A 636-amino-acid polypeptide reads, in one-letter code: Amylosucrase (636 aa).

Residues D152, H195, Q262, and R292 each contribute to the substrate site. D294 acts as the Nucleophile in catalysis. E336 functions as the Proton donor in the catalytic mechanism. Residues H400, D401, and R517 each contribute to the substrate site.

Belongs to the glycosyl hydrolase 13 family. In terms of assembly, monomer.

It is found in the secreted. The enzyme catalyses [(1-&gt;4)-alpha-D-glucosyl](n) + sucrose = [(1-&gt;4)-alpha-D-glucosyl](n+1) + D-fructose. Its activity is regulated as follows. Amylosucrase favors hydrolysis at low sucrose concentrations, and polymerization at high sucrose concentrations. Competitively inhibited by fructose. In terms of biological role, catalyzes the synthesis of alpha-glucan from sucrose. Catalyzes, in addition, sucrose hydrolysis, maltose and maltotriose synthesis by successive transfers of the glucosyl moiety of sucrose onto the released glucose, and finally turanose and trehalulose synthesis, these two sucrose isomers being obtained by glucosyl transfer onto fructose. The sequence is that of Amylosucrase (ams) from Neisseria polysaccharea.